A 286-amino-acid chain; its full sequence is 33 kDa chaperonin (286 aa).

2 cysteine pairs are disulfide-bonded: cysteine 225–cysteine 227 and cysteine 258–cysteine 261.

Belongs to the HSP33 family. In terms of processing, under oxidizing conditions two disulfide bonds are formed involving the reactive cysteines. Under reducing conditions zinc is bound to the reactive cysteines and the protein is inactive.

It is found in the cytoplasm. Its function is as follows. Redox regulated molecular chaperone. Protects both thermally unfolding and oxidatively damaged proteins from irreversible aggregation. Plays an important role in the bacterial defense system toward oxidative stress. The polypeptide is 33 kDa chaperonin (Shewanella frigidimarina (strain NCIMB 400)).